The chain runs to 117 residues: Putative membrane protein insertion efficiency factor (117 aa).

This sequence belongs to the UPF0161 family.

The protein resides in the cell inner membrane. Functionally, could be involved in insertion of integral membrane proteins into the membrane. This is Putative membrane protein insertion efficiency factor from Bartonella henselae (strain ATCC 49882 / DSM 28221 / CCUG 30454 / Houston 1) (Rochalimaea henselae).